A 257-amino-acid chain; its full sequence is Flavin-dependent thymidylate synthase (257 aa).

The ThyX domain maps to 1-202 (MNVKLVSYTR…PRLFRYVGPN (202 aa)). Residues serine 55, 79–81 (RHR), and glutamine 87 contribute to the FAD site. Residues 76-79 (QLVR), 87-91 (QMSHR), and arginine 141 each bind dUMP. The ThyX motif signature appears at 79–89 (RHRVASYTQMS). Residues 157 to 159 (NAR) and asparagine 163 each bind FAD. Arginine 168 contributes to the dUMP binding site. Catalysis depends on arginine 168, which acts as the Involved in ionization of N3 of dUMP, leading to its activation.

It belongs to the thymidylate synthase ThyX family. As to quaternary structure, homotetramer. It depends on FAD as a cofactor.

It carries out the reaction dUMP + (6R)-5,10-methylene-5,6,7,8-tetrahydrofolate + NADPH + H(+) = dTMP + (6S)-5,6,7,8-tetrahydrofolate + NADP(+). It functions in the pathway pyrimidine metabolism; dTTP biosynthesis. Catalyzes the reductive methylation of 2'-deoxyuridine-5'-monophosphate (dUMP) to 2'-deoxythymidine-5'-monophosphate (dTMP) while utilizing 5,10-methylenetetrahydrofolate (mTHF) as the methyl donor, and NADPH and FADH(2) as the reductant. The protein is Flavin-dependent thymidylate synthase of Sulfurisphaera tokodaii (strain DSM 16993 / JCM 10545 / NBRC 100140 / 7) (Sulfolobus tokodaii).